We begin with the raw amino-acid sequence, 160 residues long: uncharacterized protein (160 aa).

The signal sequence occupies residues 1–25; the sequence is MKVTLLLLLIAVLLLLLIFMKVCKQ.

This is an uncharacterized protein from Invertebrate iridescent virus 6 (IIV-6).